A 447-amino-acid chain; its full sequence is Pup--protein ligase 2 (447 aa).

Glu4 serves as a coordination point for Mg(2+). Arg48 contacts ATP. Tyr50 is a Mg(2+) binding site. Asp52 functions as the Proton acceptor in the catalytic mechanism. Glu58 is a binding site for Mg(2+). Residues Thr61 and Trp414 each coordinate ATP.

This sequence belongs to the Pup ligase/Pup deamidase family. Pup-conjugating enzyme subfamily.

The enzyme catalyses ATP + [prokaryotic ubiquitin-like protein]-L-glutamate + [protein]-L-lysine = ADP + phosphate + N(6)-([prokaryotic ubiquitin-like protein]-gamma-L-glutamyl)-[protein]-L-lysine.. The protein operates within protein degradation; proteasomal Pup-dependent pathway. It functions in the pathway protein modification; protein pupylation. Catalyzes the covalent attachment of the prokaryotic ubiquitin-like protein modifier Pup to the proteasomal substrate proteins, thereby targeting them for proteasomal degradation. This tagging system is termed pupylation. The ligation reaction involves the side-chain carboxylate of the C-terminal glutamate of Pup and the side-chain amino group of a substrate lysine. The polypeptide is Pup--protein ligase 2 (Rhodococcus erythropolis (Arthrobacter picolinophilus)).